The following is a 901-amino-acid chain: HTH-type transcriptional regulator MalT (901 aa).

Position 39-46 (39-46 (SPAGYGKT)) interacts with ATP. The HTH luxR-type domain maps to 829-894 (ELIHTSPLTQ…AAVQHAQKLL (66 aa)). Residues 853–872 (NEQIAGELEVAATTIKTHIR) constitute a DNA-binding region (H-T-H motif).

It belongs to the MalT family. In terms of assembly, monomer in solution. Oligomerizes to an active state in the presence of the positive effectors ATP and maltotriose.

With respect to regulation, activated by ATP and maltotriose, which are both required for DNA binding. Its function is as follows. Positively regulates the transcription of the maltose regulon whose gene products are responsible for uptake and catabolism of malto-oligosaccharides. Specifically binds to the promoter region of its target genes, recognizing a short DNA motif called the MalT box. The sequence is that of HTH-type transcriptional regulator MalT from Shigella sonnei (strain Ss046).